Here is a 273-residue protein sequence, read N- to C-terminus: 3-methyl-2-oxobutanoate hydroxymethyltransferase (273 aa).

Positions 53 and 92 each coordinate Mg(2+). Residues 53-54, D92, and K122 each bind 3-methyl-2-oxobutanoate; that span reads DS. E124 is a binding site for Mg(2+). The active-site Proton acceptor is E191.

It belongs to the PanB family. In terms of assembly, homodecamer; pentamer of dimers. Requires Mg(2+) as cofactor.

It is found in the cytoplasm. The enzyme catalyses 3-methyl-2-oxobutanoate + (6R)-5,10-methylene-5,6,7,8-tetrahydrofolate + H2O = 2-dehydropantoate + (6S)-5,6,7,8-tetrahydrofolate. It functions in the pathway cofactor biosynthesis; (R)-pantothenate biosynthesis; (R)-pantoate from 3-methyl-2-oxobutanoate: step 1/2. Functionally, catalyzes the reversible reaction in which hydroxymethyl group from 5,10-methylenetetrahydrofolate is transferred onto alpha-ketoisovalerate to form ketopantoate. The sequence is that of 3-methyl-2-oxobutanoate hydroxymethyltransferase from Porphyromonas gingivalis (strain ATCC 33277 / DSM 20709 / CIP 103683 / JCM 12257 / NCTC 11834 / 2561).